A 219-amino-acid polypeptide reads, in one-letter code: Flagellar L-ring protein (219 aa).

An N-terminal signal peptide occupies residues 1-14 (MKRLVLISLVLAAG). C15 carries the N-palmitoyl cysteine lipid modification. C15 carries S-diacylglycerol cysteine lipidation.

The protein belongs to the FlgH family. As to quaternary structure, the basal body constitutes a major portion of the flagellar organelle and consists of four rings (L,P,S, and M) mounted on a central rod.

It is found in the cell outer membrane. Its subcellular location is the bacterial flagellum basal body. In terms of biological role, assembles around the rod to form the L-ring and probably protects the motor/basal body from shearing forces during rotation. This is Flagellar L-ring protein from Dechloromonas aromatica (strain RCB).